Reading from the N-terminus, the 309-residue chain is Ribosomal RNA small subunit methyltransferase H (309 aa).

S-adenosyl-L-methionine contacts are provided by residues 36–38 (AGH), D55, F81, D102, and Q109.

It belongs to the methyltransferase superfamily. RsmH family.

It is found in the cytoplasm. The catalysed reaction is cytidine(1402) in 16S rRNA + S-adenosyl-L-methionine = N(4)-methylcytidine(1402) in 16S rRNA + S-adenosyl-L-homocysteine + H(+). Its function is as follows. Specifically methylates the N4 position of cytidine in position 1402 (C1402) of 16S rRNA. This Mycoplasma genitalium (strain ATCC 33530 / DSM 19775 / NCTC 10195 / G37) (Mycoplasmoides genitalium) protein is Ribosomal RNA small subunit methyltransferase H.